Consider the following 275-residue polypeptide: Orotidine 5'-phosphate decarboxylase (275 aa).

The Proton donor role is filled by Lys101.

Belongs to the OMP decarboxylase family. Type 2 subfamily.

It carries out the reaction orotidine 5'-phosphate + H(+) = UMP + CO2. It functions in the pathway pyrimidine metabolism; UMP biosynthesis via de novo pathway; UMP from orotate: step 2/2. The polypeptide is Orotidine 5'-phosphate decarboxylase (Leptospira interrogans serogroup Icterohaemorrhagiae serovar Lai (strain 56601)).